Consider the following 231-residue polypeptide: 4-hydroxy-tetrahydrodipicolinate reductase (231 aa).

NAD(+) contacts are provided by residues Asp33, 68-70 (CTT), and 92-95 (SSNT). His124 functions as the Proton donor/acceptor in the catalytic mechanism. Residue His125 coordinates (S)-2,3,4,5-tetrahydrodipicolinate. Lys128 functions as the Proton donor in the catalytic mechanism. 134–135 (GT) serves as a coordination point for (S)-2,3,4,5-tetrahydrodipicolinate.

Belongs to the DapB family.

The protein localises to the cytoplasm. The enzyme catalyses (S)-2,3,4,5-tetrahydrodipicolinate + NAD(+) + H2O = (2S,4S)-4-hydroxy-2,3,4,5-tetrahydrodipicolinate + NADH + H(+). The catalysed reaction is (S)-2,3,4,5-tetrahydrodipicolinate + NADP(+) + H2O = (2S,4S)-4-hydroxy-2,3,4,5-tetrahydrodipicolinate + NADPH + H(+). Its pathway is amino-acid biosynthesis; L-lysine biosynthesis via DAP pathway; (S)-tetrahydrodipicolinate from L-aspartate: step 4/4. Catalyzes the conversion of 4-hydroxy-tetrahydrodipicolinate (HTPA) to tetrahydrodipicolinate. The sequence is that of 4-hydroxy-tetrahydrodipicolinate reductase from Brachyspira hyodysenteriae (strain ATCC 49526 / WA1).